The sequence spans 64 residues: uncharacterized protein (64 aa).

This is an uncharacterized protein from Escherichia coli O157:H7.